The following is a 522-amino-acid chain: 2-isopropylmalate synthase (522 aa).

Positions 5-267 constitute a Pyruvate carboxyltransferase domain; the sequence is VIIFDTTLRD…ETGINAKEIH (263 aa). Mn(2+) is bound by residues Asp-14, His-202, His-204, and Asn-238. A regulatory domain region spans residues 392 to 522; it reads QLQQLVVQSD…MQKNRELGGV (131 aa).

The protein belongs to the alpha-IPM synthase/homocitrate synthase family. LeuA type 1 subfamily. As to quaternary structure, homodimer. The cofactor is Mn(2+).

It localises to the cytoplasm. The catalysed reaction is 3-methyl-2-oxobutanoate + acetyl-CoA + H2O = (2S)-2-isopropylmalate + CoA + H(+). It functions in the pathway amino-acid biosynthesis; L-leucine biosynthesis; L-leucine from 3-methyl-2-oxobutanoate: step 1/4. Catalyzes the condensation of the acetyl group of acetyl-CoA with 3-methyl-2-oxobutanoate (2-ketoisovalerate) to form 3-carboxy-3-hydroxy-4-methylpentanoate (2-isopropylmalate). The chain is 2-isopropylmalate synthase from Shewanella putrefaciens (strain CN-32 / ATCC BAA-453).